A 155-amino-acid chain; its full sequence is Ribosome maturation factor RimP (155 aa).

This sequence belongs to the RimP family.

It is found in the cytoplasm. Required for maturation of 30S ribosomal subunits. In Staphylococcus aureus (strain bovine RF122 / ET3-1), this protein is Ribosome maturation factor RimP.